Reading from the N-terminus, the 203-residue chain is MAMVTADASAAADAATKQPDVEKDYSSYNGASTAGAGGGGVVESVVARWRREDMLDKCPLALHAAAAAFAFVALVLVASNQHGDWMQFDRYQEYMYLLAIAALAFAYSLAQALRHAHRMRGGADPIPAPSARLFDFIADQVVAYLLMSALSAAIPITNRMRTAVINNFTDATAAAISMAFLAFVALALSATVSGYKLSRQMYM.

Residues 1-57 (MAMVTADASAAADAATKQPDVEKDYSSYNGASTAGAGGGGVVESVVARWRREDMLDK) lie on the Cytoplasmic side of the membrane. The helical transmembrane segment at 58–78 (CPLALHAAAAAFAFVALVLVA) threads the bilayer. The Extracellular segment spans residues 79–92 (SNQHGDWMQFDRYQ). Residues 93–113 (EYMYLLAIAALAFAYSLAQAL) form a helical membrane-spanning segment. The Cytoplasmic portion of the chain corresponds to 114–135 (RHAHRMRGGADPIPAPSARLFD). A helical membrane pass occupies residues 136 to 156 (FIADQVVAYLLMSALSAAIPI). At 157-171 (TNRMRTAVINNFTDA) the chain is on the extracellular side. N167 carries N-linked (GlcNAc...) asparagine glycosylation. A helical transmembrane segment spans residues 172 to 192 (TAAAISMAFLAFVALALSATV). The Cytoplasmic portion of the chain corresponds to 193-203 (SGYKLSRQMYM).

The protein belongs to the Casparian strip membrane proteins (CASP) family. Homodimer and heterodimers.

The protein localises to the cell membrane. The polypeptide is CASP-like protein 4B2 (Hordeum vulgare subsp. vulgare (Domesticated barley)).